Reading from the N-terminus, the 294-residue chain is Small ribosomal subunit biogenesis GTPase RsgA 2, mitochondrial (294 aa).

The N-terminal 68 residues, 1 to 68 (MQTFSSAAAL…RSFLAPVLPL (68 aa)), are a transit peptide targeting the mitochondrion. Positions 155–294 (VSEVLDPPVA…VSFFLSYFIL (140 aa)) constitute a CP-type G domain. 255-263 (GPSGVGKSS) is a GTP binding site.

The protein belongs to the TRAFAC class YlqF/YawG GTPase family.

The protein localises to the mitochondrion. This chain is Small ribosomal subunit biogenesis GTPase RsgA 2, mitochondrial, found in Arabidopsis thaliana (Mouse-ear cress).